Here is a 274-residue protein sequence, read N- to C-terminus: 2,3,4,5-tetrahydropyridine-2,6-dicarboxylate N-succinyltransferase (274 aa).

Arginine 104 and aspartate 141 together coordinate substrate.

Belongs to the transferase hexapeptide repeat family. As to quaternary structure, homotrimer.

It is found in the cytoplasm. The enzyme catalyses (S)-2,3,4,5-tetrahydrodipicolinate + succinyl-CoA + H2O = (S)-2-succinylamino-6-oxoheptanedioate + CoA. It functions in the pathway amino-acid biosynthesis; L-lysine biosynthesis via DAP pathway; LL-2,6-diaminopimelate from (S)-tetrahydrodipicolinate (succinylase route): step 1/3. In Shewanella denitrificans (strain OS217 / ATCC BAA-1090 / DSM 15013), this protein is 2,3,4,5-tetrahydropyridine-2,6-dicarboxylate N-succinyltransferase.